The sequence spans 195 residues: Holliday junction branch migration complex subunit RuvA (195 aa).

The domain I stretch occupies residues Met1 to Lys64. A domain II region spans residues Asp65–Val137. The interval Val137–Lys141 is flexible linker. The domain III stretch occupies residues Glu142–Arg195.

The protein belongs to the RuvA family. In terms of assembly, homotetramer. Forms an RuvA(8)-RuvB(12)-Holliday junction (HJ) complex. HJ DNA is sandwiched between 2 RuvA tetramers; dsDNA enters through RuvA and exits via RuvB. An RuvB hexamer assembles on each DNA strand where it exits the tetramer. Each RuvB hexamer is contacted by two RuvA subunits (via domain III) on 2 adjacent RuvB subunits; this complex drives branch migration. In the full resolvosome a probable DNA-RuvA(4)-RuvB(12)-RuvC(2) complex forms which resolves the HJ.

It localises to the cytoplasm. Its function is as follows. The RuvA-RuvB-RuvC complex processes Holliday junction (HJ) DNA during genetic recombination and DNA repair, while the RuvA-RuvB complex plays an important role in the rescue of blocked DNA replication forks via replication fork reversal (RFR). RuvA specifically binds to HJ cruciform DNA, conferring on it an open structure. The RuvB hexamer acts as an ATP-dependent pump, pulling dsDNA into and through the RuvAB complex. HJ branch migration allows RuvC to scan DNA until it finds its consensus sequence, where it cleaves and resolves the cruciform DNA. The polypeptide is Holliday junction branch migration complex subunit RuvA (Kosmotoga olearia (strain ATCC BAA-1733 / DSM 21960 / TBF 19.5.1)).